The sequence spans 438 residues: Probable glucose-6-phosphate isomerase (438 aa).

The active-site Proton donor is Glu-280. Catalysis depends on residues His-301 and Lys-410.

This sequence belongs to the GPI family.

It is found in the cytoplasm. It catalyses the reaction alpha-D-glucose 6-phosphate = beta-D-fructose 6-phosphate. Its pathway is carbohydrate biosynthesis; gluconeogenesis. It functions in the pathway carbohydrate degradation; glycolysis; D-glyceraldehyde 3-phosphate and glycerone phosphate from D-glucose: step 2/4. Its function is as follows. Catalyzes the reversible isomerization of glucose-6-phosphate to fructose-6-phosphate. In Methanococcus maripaludis (strain DSM 14266 / JCM 13030 / NBRC 101832 / S2 / LL), this protein is Probable glucose-6-phosphate isomerase.